The primary structure comprises 547 residues: Natural resistance-associated macrophage protein 1 (547 aa).

The tract at residues 1 to 30 (MTGDKDPQSVSRPNYGSISHPPSSEPQQEP) is disordered. Residues 1–54 (MTGDKDPQSVSRPNYGSISHPPSSEPQQEPLRTTYLSEKIPIPDTEPGTFSLRK) are Cytoplasmic-facing. Residues 8–17 (QSVSRPNYGS) are compositionally biased toward polar residues. Over residues 21 to 30 (PPSSEPQQEP) the composition is skewed to low complexity. A helical transmembrane segment spans residues 55 to 75 (LWAFTGPGFLMSIAFLDPGNI). Residues 76-81 (ESDLQA) are Extracellular-facing. Residues 82–102 (GAVAGFKLLWVLLWATVLGLL) traverse the membrane as a helical segment. Residues 103–139 (CQRLAARLGVVTGKDLGEICHLYYPKVPRTLLWLTIE) are Cytoplasmic-facing. Residues 140 to 160 (LAIVGSDMQEVIGTAIAFSLL) traverse the membrane as a helical segment. Topologically, residues 161-164 (SAGR) are extracellular. A helical membrane pass occupies residues 165-185 (IPLWGGVLITIVDTFFFLFLD). The Cytoplasmic portion of the chain corresponds to 186 to 193 (NYGLRKLE). The helical transmembrane segment at 194 to 214 (AFFGILITIMALTFGYEYVVA) threads the bilayer. Residues 215-240 (RPAQVALLQGLLLPSCPGCGRPELLQ) lie on the Extracellular side of the membrane. Residues 241–261 (AVGIVGAIIMPHNIYLHSALV) traverse the membrane as a helical segment. Topologically, residues 262–286 (KSREIDRSRRPDIREANMYFLIEAS) are cytoplasmic. A helical membrane pass occupies residues 287–307 (IALSVSFFINLFVVAVFGQAF). The Extracellular portion of the chain corresponds to 308–346 (YQQTNEAAFNVCANSSLHDYAKIFPRNNLTVEVDIYQGG). Residues asparagine 321 and asparagine 335 are each glycosylated (N-linked (GlcNAc...) asparagine). The chain crosses the membrane as a helical span at residues 347–367 (VMLGCVFGPAALYIWAVGLLA). Residues 368–394 (AGQSSTMTGTYAGQFVMEGFLRLRWSR) lie on the Cytoplasmic side of the membrane. Residues 395–415 (FARVLLTRSCAILPTVLVVVF) traverse the membrane as a helical segment. The Extracellular segment spans residues 416–432 (RDLKDLSGLNDLLNVLQ). A helical transmembrane segment spans residues 433–453 (SLLLPFAVLPILTFTSMPALM). At 454–464 (QEFANGRLSKA) the chain is on the cytoplasmic side. Residues 465–485 (ITSFIMALVCAINLYFVVIYL) form a helical membrane-spanning segment. Over 486 to 492 (PSLPHPA) the chain is Extracellular. Residues 493-513 (YFILVALLAIVYLGLTTYLVW) form a helical membrane-spanning segment. Topologically, residues 514-547 (TCFIAHGVTLLAHSSHQHFLYGLPDVEEKGKISG) are cytoplasmic.

Belongs to the NRAMP family.

It is found in the late endosome membrane. The protein resides in the lysosome membrane. The catalysed reaction is Zn(2+)(in) + H(+)(out) = Zn(2+)(out) + H(+)(in). The enzyme catalyses Fe(2+)(in) + H(+)(out) = Fe(2+)(out) + H(+)(in). It catalyses the reaction Mn(2+)(in) + H(+)(out) = Mn(2+)(out) + H(+)(in). In terms of biological role, macrophage-specific antiporter that fluxes metal ions in either direction against a proton gradient. Localized to late endosomal lysosomal membranes, delivers bivalent cations from the cytosol into these acidic compartments where they may directly affect antimicrobial activity. Involved in iron metabolism and host natural resistance to infection with intracellular parasites. Pathogen resistance involves sequestration of Fe(2+) and Mn(2+), cofactors of both prokaryotic and eukaryotic catalases and superoxide dismutases, not only to protect the macrophage against its own generation of reactive oxygen species, but to deny the cations to the pathogen for synthesis of its protective enzymes. This is Natural resistance-associated macrophage protein 1 (SLC11A1) from Canis lupus familiaris (Dog).